Here is a 63-residue protein sequence, read N- to C-terminus: Large ribosomal subunit protein uL30 (63 aa).

It belongs to the universal ribosomal protein uL30 family. As to quaternary structure, part of the 50S ribosomal subunit.

This is Large ribosomal subunit protein uL30 from Natranaerobius thermophilus (strain ATCC BAA-1301 / DSM 18059 / JW/NM-WN-LF).